The following is a 360-amino-acid chain: Peptide chain release factor 1 (360 aa).

Glutamine 235 carries the post-translational modification N5-methylglutamine. Residues 284–313 are disordered; the sequence is AKRQQAEASTRRNLLGSGDRSDRNRTYNFP.

It belongs to the prokaryotic/mitochondrial release factor family. Methylated by PrmC. Methylation increases the termination efficiency of RF1.

The protein resides in the cytoplasm. Functionally, peptide chain release factor 1 directs the termination of translation in response to the peptide chain termination codons UAG and UAA. The sequence is that of Peptide chain release factor 1 from Citrobacter koseri (strain ATCC BAA-895 / CDC 4225-83 / SGSC4696).